The following is a 500-amino-acid chain: Phenylalanine--tRNA ligase alpha subunit (500 aa).

L-phenylalanine-binding positions include T343, Q382–D384, and F423. Residue E425 participates in Mg(2+) binding. F448 serves as a coordination point for L-phenylalanine.

This sequence belongs to the class-II aminoacyl-tRNA synthetase family. Phe-tRNA synthetase alpha subunit type 2 subfamily. As to quaternary structure, tetramer of two alpha and two beta subunits. The cofactor is Mg(2+).

The protein resides in the cytoplasm. It catalyses the reaction tRNA(Phe) + L-phenylalanine + ATP = L-phenylalanyl-tRNA(Phe) + AMP + diphosphate + H(+). In Thermococcus onnurineus (strain NA1), this protein is Phenylalanine--tRNA ligase alpha subunit.